Reading from the N-terminus, the 198-residue chain is MSTVDLARVGACILKHAVTGEAVELRSLWRERACVVAGLRRFGCVVCRWIAQDLSSLAGLLDQHGVRLVGVGPEALGLQEFLDGDYFAGELYLDESKQLYNELGFKRYNSPSILPAALGKPVRDVAAKAKAVGIQGNLSGDLLQSGGLLVVSKGGDKVLLHFVQKSPGDYVPKEHILQVLGISAEVCASNPPQCDREA.

Position 108 is a phosphotyrosine (Tyr108).

This sequence belongs to the peroxiredoxin-like PRXL2 family. Prostamide/prostaglandin F synthase subfamily.

Its subcellular location is the cytoplasm. It is found in the cytosol. The catalysed reaction is prostaglandin H2 + [thioredoxin]-dithiol = prostaglandin F2alpha + [thioredoxin]-disulfide. It catalyses the reaction prostamide F2alpha + [thioredoxin]-disulfide = prostamide H2 + [thioredoxin]-dithiol. Functionally, catalyzes the reduction of prostaglandin-ethanolamide H(2) (prostamide H(2)) to prostamide F(2alpha) with NADPH as proton donor. Also able to reduce prostaglandin H(2) to prostaglandin F(2alpha). This is Prostamide/prostaglandin F synthase (PRXL2B) from Pongo abelii (Sumatran orangutan).